Consider the following 160-residue polypeptide: MATPITTIKKETKTAEQIKLEKIEELKELLAENEDAVSKTMTLMNELNDLGIFDAATSMLRAKEDIAKIALGQVSREPVTNLINTMMAAGGALTKADPEFTAKLLESVMAGTEQAQSFLKEDKKVGILDLLKAMNDPDINRAVGFGLQFLKGMGKELREQ.

This sequence to A.fulgidus AF1717.

This is an uncharacterized protein from Bacillus subtilis (strain 168).